Consider the following 464-residue polypeptide: Siroheme synthase (464 aa).

The precorrin-2 dehydrogenase /sirohydrochlorin ferrochelatase stretch occupies residues 1-203 (MDYLPLFHNL…GQETEAERLL (203 aa)). Residues 22 to 23 (EI) and 43 to 44 (PQ) each bind NAD(+). A Phosphoserine modification is found at S128. Residues 216–464 (GEVYLVGAGP…AWFEGRQSAD (249 aa)) form a uroporphyrinogen-III C-methyltransferase region. Residue P225 participates in S-adenosyl-L-methionine binding. Residue D248 is the Proton acceptor of the active site. K270 (proton donor) is an active-site residue. S-adenosyl-L-methionine-binding positions include 301 to 303 (GGD), I306, 331 to 332 (TA), M383, and G412.

In the N-terminal section; belongs to the precorrin-2 dehydrogenase / sirohydrochlorin ferrochelatase family. It in the C-terminal section; belongs to the precorrin methyltransferase family.

The catalysed reaction is uroporphyrinogen III + 2 S-adenosyl-L-methionine = precorrin-2 + 2 S-adenosyl-L-homocysteine + H(+). It carries out the reaction precorrin-2 + NAD(+) = sirohydrochlorin + NADH + 2 H(+). The enzyme catalyses siroheme + 2 H(+) = sirohydrochlorin + Fe(2+). Its pathway is cofactor biosynthesis; adenosylcobalamin biosynthesis; precorrin-2 from uroporphyrinogen III: step 1/1. It functions in the pathway cofactor biosynthesis; adenosylcobalamin biosynthesis; sirohydrochlorin from precorrin-2: step 1/1. It participates in porphyrin-containing compound metabolism; siroheme biosynthesis; precorrin-2 from uroporphyrinogen III: step 1/1. The protein operates within porphyrin-containing compound metabolism; siroheme biosynthesis; siroheme from sirohydrochlorin: step 1/1. Its pathway is porphyrin-containing compound metabolism; siroheme biosynthesis; sirohydrochlorin from precorrin-2: step 1/1. Multifunctional enzyme that catalyzes the SAM-dependent methylations of uroporphyrinogen III at position C-2 and C-7 to form precorrin-2 via precorrin-1. Then it catalyzes the NAD-dependent ring dehydrogenation of precorrin-2 to yield sirohydrochlorin. Finally, it catalyzes the ferrochelation of sirohydrochlorin to yield siroheme. The chain is Siroheme synthase from Azotobacter vinelandii (strain DJ / ATCC BAA-1303).